We begin with the raw amino-acid sequence, 183 residues long: Hypoxanthine/guanine phosphoribosyltransferase (183 aa).

Belongs to the purine/pyrimidine phosphoribosyltransferase family. Archaeal HPRT subfamily. As to quaternary structure, homodimer.

The protein localises to the cytoplasm. The enzyme catalyses IMP + diphosphate = hypoxanthine + 5-phospho-alpha-D-ribose 1-diphosphate. The catalysed reaction is GMP + diphosphate = guanine + 5-phospho-alpha-D-ribose 1-diphosphate. Its pathway is purine metabolism; IMP biosynthesis via salvage pathway; IMP from hypoxanthine: step 1/1. Functionally, catalyzes a salvage reaction resulting in the formation of IMP that is energically less costly than de novo synthesis. The sequence is that of Hypoxanthine/guanine phosphoribosyltransferase from Methanocaldococcus jannaschii (strain ATCC 43067 / DSM 2661 / JAL-1 / JCM 10045 / NBRC 100440) (Methanococcus jannaschii).